Consider the following 257-residue polypeptide: Imidazole glycerol phosphate synthase subunit HisF (257 aa).

Residues Asp11 and Asp130 contribute to the active site.

The protein belongs to the HisA/HisF family. In terms of assembly, heterodimer of HisH and HisF.

It localises to the cytoplasm. The enzyme catalyses 5-[(5-phospho-1-deoxy-D-ribulos-1-ylimino)methylamino]-1-(5-phospho-beta-D-ribosyl)imidazole-4-carboxamide + L-glutamine = D-erythro-1-(imidazol-4-yl)glycerol 3-phosphate + 5-amino-1-(5-phospho-beta-D-ribosyl)imidazole-4-carboxamide + L-glutamate + H(+). It participates in amino-acid biosynthesis; L-histidine biosynthesis; L-histidine from 5-phospho-alpha-D-ribose 1-diphosphate: step 5/9. IGPS catalyzes the conversion of PRFAR and glutamine to IGP, AICAR and glutamate. The HisF subunit catalyzes the cyclization activity that produces IGP and AICAR from PRFAR using the ammonia provided by the HisH subunit. This chain is Imidazole glycerol phosphate synthase subunit HisF, found in Tolumonas auensis (strain DSM 9187 / NBRC 110442 / TA 4).